The chain runs to 209 residues: N-acetyltransferase aca1 (209 aa).

Residues 26–202 (TNVKNKEELL…DAYIYQYHFP (177 aa)) form the N-acetyltransferase domain. Asparagine 118 contacts substrate. 128 to 133 (RSKGIG) provides a ligand contact to CoA. 155-156 (NL) serves as a coordination point for substrate.

It belongs to the acetyltransferase family. In terms of assembly, homodimer.

It localises to the cytoplasm. Its subcellular location is the mitochondrion. It catalyses the reaction L-glutamate 5-semialdehyde + acetyl-CoA = N-acetyl-L-glutamate 5-semialdehyde + CoA + H(+). Functionally, N-acetyltransferase involved in oxidative stress resistance. Acetylates the toxic proline metabolism intermediate (S)-1-pyrroline-5-carboxylate (P5C), or more likely its spontaneously forming tautomer glutamate-5-semialdehyde (GSA) into N-acetyl-GSA for arginine synthesis in the mitochondria. P5C has been shown to increase the levels of reactive oxygen species (ROS) in the cell by inhibiting the function of the respiratory chain in the mitochondria. The enzyme is able to reduce intracellular ROS levels under P5C-induced oxidative stress and protects cells from damage by oxidative stress. Also acetylates and thereby detoxifies the proline analog azetidine-2-carboxylate (AZC), however it is unlikely that AZC is a natural substrate as it occurs only in plants belonging to the Lilaceae family. The sequence is that of N-acetyltransferase aca1 from Schizosaccharomyces pombe (strain 972 / ATCC 24843) (Fission yeast).